A 274-amino-acid polypeptide reads, in one-letter code: Large ribosomal subunit protein uL2cz/uL2cy (274 aa).

Positions 224 to 274 are disordered; it reads NPVDHPHGGGEGRAPIGRKKPATPWGYPALGRRSRKRNKYSDNLILRRRSK.

It belongs to the universal ribosomal protein uL2 family. In terms of assembly, part of the 50S ribosomal subunit.

The protein resides in the plastid. It is found in the chloroplast. This Morus indica (Mulberry) protein is Large ribosomal subunit protein uL2cz/uL2cy (rpl2-A).